The following is a 414-amino-acid chain: MGQTLSEPVTEKHSVNGSNEFVLYGLSSMQGWRISMEDAHSAILSMECSAVKDPVDFFAVYDGHGGDKVAKWCGSNLPQILEKNPDFQKGDFVNALKSSFLNADKAILDDDQFHTDPSGCTATVVLRVGNKLYCANAGDSRTVLGSKGIAKPLSADHKPSNEAEKARICAAGGFVDFGRVNGNLALSRAIGDFEFKNSNLEPEKQIVTALPDVVVHEITDDDEFVVLACDGIWDCKTSQQVIEFVRRGIVAGTSLEKIAENLMDNCIASDTETTGLGCDNMTVCIVALLQENDKSAWYKKIADRVAANDGPCAPPEYAENHGPGWRSGDNNKKVIVPPNFHQVKLNGSDGYDKDANENSKEDDSTNGSLAAGFRWKEHFFPHKAEEENSSSETDIVNSNKDVADDHKEAVSAAD.

The PPM-type phosphatase domain maps to 23–288 (LYGLSSMQGW…DNMTVCIVAL (266 aa)). Mn(2+) contacts are provided by D62, G63, D230, and D279. 2 disordered regions span residues 313 to 368 (APPE…TNGS) and 380 to 414 (FPHKAEEENSSSETDIVNSNKDVADDHKEAVSAAD). Positions 350 to 363 (GYDKDANENSKEDD) are enriched in basic and acidic residues. Residues 390 to 400 (SSETDIVNSNK) are compositionally biased toward polar residues. The segment covering 401–414 (DVADDHKEAVSAAD) has biased composition (basic and acidic residues).

Belongs to the PP2C family. In terms of assembly, monomer. The cofactor is Mg(2+). Requires Mn(2+) as cofactor.

It is found in the cytoplasm. Its subcellular location is the nucleus. The catalysed reaction is O-phospho-L-seryl-[protein] + H2O = L-seryl-[protein] + phosphate. It carries out the reaction O-phospho-L-threonyl-[protein] + H2O = L-threonyl-[protein] + phosphate. Functionally, dephosphorylating regulator for many key proteins. Has an important role in osmotic stability and cell shape control. It may negatively regulate the osmosensing signal transmitted through wis1 map kinase. This is Protein phosphatase 2C homolog 3 (ptc3) from Schizosaccharomyces pombe (strain 972 / ATCC 24843) (Fission yeast).